Reading from the N-terminus, the 245-residue chain is Flavin-dependent thymidylate synthase (245 aa).

Residues 5–210 (IKVRLVNYTK…ELRPIIRWAK (206 aa)) form the ThyX domain. FAD is bound by residues Ser-59, 83-85 (RHR), and Gln-91. Residues 80–83 (QLVR), 91–95 (QQSMR), and Arg-149 contribute to the dUMP site. Residues 83–93 (RHRIASYTQQS) carry the ThyX motif motif. Residues 165-167 (NLR) and His-171 each bind FAD. Arg-176 contacts dUMP. Arg-176 functions as the Involved in ionization of N3 of dUMP, leading to its activation in the catalytic mechanism.

The protein belongs to the thymidylate synthase ThyX family. Homotetramer. FAD is required as a cofactor.

It carries out the reaction dUMP + (6R)-5,10-methylene-5,6,7,8-tetrahydrofolate + NADPH + H(+) = dTMP + (6S)-5,6,7,8-tetrahydrofolate + NADP(+). Its pathway is pyrimidine metabolism; dTTP biosynthesis. In terms of biological role, catalyzes the reductive methylation of 2'-deoxyuridine-5'-monophosphate (dUMP) to 2'-deoxythymidine-5'-monophosphate (dTMP) while utilizing 5,10-methylenetetrahydrofolate (mTHF) as the methyl donor, and NADPH and FADH(2) as the reductant. This chain is Flavin-dependent thymidylate synthase, found in Thermococcus onnurineus (strain NA1).